A 1088-amino-acid polypeptide reads, in one-letter code: DNA damage-binding protein 1b (1088 aa).

The protein belongs to the DDB1 family. In terms of assembly, interacts with DDA1. Binds to KTN80.2/DWA3. Interacts with HTD1.

It is found in the nucleus. The protein operates within protein modification; protein ubiquitination. Component of light signal transduction machinery. Involved in repression of photomorphogenesis in darkness. Plays a role in DNA repair by forming with DDB2 the UV-damaged DNA-binding protein complex (UV-DDB). This is DNA damage-binding protein 1b from Arabidopsis thaliana (Mouse-ear cress).